A 418-amino-acid chain; its full sequence is 3-isopropylmalate dehydratase large subunit (418 aa).

The [4Fe-4S] cluster site is built by C299, C359, and C362.

It belongs to the aconitase/IPM isomerase family. LeuC type 2 subfamily. Heterodimer of LeuC and LeuD. It depends on [4Fe-4S] cluster as a cofactor.

It catalyses the reaction (2R,3S)-3-isopropylmalate = (2S)-2-isopropylmalate. It participates in amino-acid biosynthesis; L-leucine biosynthesis; L-leucine from 3-methyl-2-oxobutanoate: step 2/4. In terms of biological role, catalyzes the isomerization between 2-isopropylmalate and 3-isopropylmalate, via the formation of 2-isopropylmaleate. This chain is 3-isopropylmalate dehydratase large subunit, found in Nitratidesulfovibrio vulgaris (strain DSM 19637 / Miyazaki F) (Desulfovibrio vulgaris).